A 245-amino-acid polypeptide reads, in one-letter code: Farnesol dehydrogenase (245 aa).

Residues 11-40 (VTGA…ARRV) and aspartate 64 each bind NAD(+). Serine 145 is a binding site for substrate. Tyrosine 160 functions as the Proton acceptor in the catalytic mechanism. Lysine 164 is a binding site for NAD(+).

It belongs to the short-chain dehydrogenases/reductases (SDR) family. Homodimer. In terms of tissue distribution, highly expressed level in the midgut and brain in adult females, and at lower level in the abdominal and thoracic ganglia. High levels are detected in corpora allata (CA), Malpighian tubules and fat body.

It catalyses the reaction (2E,6E)-farnesol + NADP(+) = (2E,6E)-farnesal + NADPH + H(+). Functionally, mediates oxidation of farnesol into farnesal, a precursor of juvenile hormone in the corpora allata (CA), the glands that synthesize juvenile hormone. Able to oxidize C(10) to C(15) isoprenoid and aliphatic alcohols. The polypeptide is Farnesol dehydrogenase (Aedes aegypti (Yellowfever mosquito)).